The following is a 388-amino-acid chain: Probable mannan endo-1,4-beta-mannosidase A-1 (388 aa).

The first 20 residues, 1-20 (MKLSPLMALAGLASAQLALA), serve as a signal peptide directing secretion. The substrate site is built by Trp-93 and Asn-206. The Proton donor role is filled by Glu-207. N-linked (GlcNAc...) asparagine glycosylation is present at Asn-264. Tyr-282 provides a ligand contact to substrate. Glu-315 functions as the Nucleophile in the catalytic mechanism. Asn-335 carries N-linked (GlcNAc...) asparagine glycosylation. Trp-345 lines the substrate pocket.

The protein belongs to the glycosyl hydrolase 5 (cellulase A) family.

It is found in the secreted. The catalysed reaction is Random hydrolysis of (1-&gt;4)-beta-D-mannosidic linkages in mannans, galactomannans and glucomannans.. Functionally, endo-1,4-mannanase, a crucial enzyme for depolymerization of seed galactomannans and wood galactoglucomannans. The protein is Probable mannan endo-1,4-beta-mannosidase A-1 (manA-1) of Aspergillus terreus (strain NIH 2624 / FGSC A1156).